Consider the following 975-residue polypeptide: Glycine dehydrogenase (decarboxylating) (975 aa).

The residue at position 723 (Lys723) is an N6-(pyridoxal phosphate)lysine.

It belongs to the GcvP family. As to quaternary structure, the glycine cleavage system is composed of four proteins: P, T, L and H. It depends on pyridoxal 5'-phosphate as a cofactor.

It catalyses the reaction N(6)-[(R)-lipoyl]-L-lysyl-[glycine-cleavage complex H protein] + glycine + H(+) = N(6)-[(R)-S(8)-aminomethyldihydrolipoyl]-L-lysyl-[glycine-cleavage complex H protein] + CO2. Its function is as follows. The glycine cleavage system catalyzes the degradation of glycine. The P protein binds the alpha-amino group of glycine through its pyridoxal phosphate cofactor; CO(2) is released and the remaining methylamine moiety is then transferred to the lipoamide cofactor of the H protein. In Burkholderia mallei (strain NCTC 10247), this protein is Glycine dehydrogenase (decarboxylating).